We begin with the raw amino-acid sequence, 273 residues long: MKKYLLGIGLILALIACKQNVSSLDEKNSVSVDLPGEMKVLVSKEKDKDGKYSLMATVDKLELKGTSDKSNGSGTLEGEKSDKSKAKLTISEDLSKTTFEIFKEDGKTLVSKKVNSKDKSSIEEKFNAKGELSEKTILRANGTRLEYTEIKSDGTGKAKEVLKDFALEGTLAADKTTLKVTEGTVVLSKHIPNSGEITVELNDSNSTQATKKTGKWDSNTSTLTISVNSKKTKNIVFTKEDTITVQKYDSAGTNLEGNAVEIKTLDELKNALK.

The N-terminal stretch at 1–16 (MKKYLLGIGLILALIA) is a signal peptide. A lipid anchor (N-palmitoyl cysteine) is attached at Cys17. Residue Cys17 is the site of S-diacylglycerol cysteine attachment.

The protein belongs to the OspA lipoprotein family.

Its subcellular location is the cell outer membrane. The protein localises to the cell surface. In Borreliella burgdorferi (Lyme disease spirochete), this protein is Outer surface protein A.